Consider the following 364-residue polypeptide: tRNA 2-selenouridine synthase (364 aa).

Residues 14–137 (LLADTPLIDV…LRQTAIQATW (124 aa)) form the Rhodanese domain. The active-site S-selanylcysteine intermediate is cysteine 97.

This sequence belongs to the SelU family. Monomer.

The catalysed reaction is 5-methylaminomethyl-2-thiouridine(34) in tRNA + selenophosphate + (2E)-geranyl diphosphate + H2O + H(+) = 5-methylaminomethyl-2-selenouridine(34) in tRNA + (2E)-thiogeraniol + phosphate + diphosphate. It catalyses the reaction 5-methylaminomethyl-2-thiouridine(34) in tRNA + (2E)-geranyl diphosphate = 5-methylaminomethyl-S-(2E)-geranyl-thiouridine(34) in tRNA + diphosphate. The enzyme catalyses 5-methylaminomethyl-S-(2E)-geranyl-thiouridine(34) in tRNA + selenophosphate + H(+) = 5-methylaminomethyl-2-(Se-phospho)selenouridine(34) in tRNA + (2E)-thiogeraniol. It carries out the reaction 5-methylaminomethyl-2-(Se-phospho)selenouridine(34) in tRNA + H2O = 5-methylaminomethyl-2-selenouridine(34) in tRNA + phosphate. Functionally, involved in the post-transcriptional modification of the uridine at the wobble position (U34) of tRNA(Lys), tRNA(Glu) and tRNA(Gln). Catalyzes the conversion of 2-thiouridine (S2U-RNA) to 2-selenouridine (Se2U-RNA). Acts in a two-step process involving geranylation of 2-thiouridine (S2U) to S-geranyl-2-thiouridine (geS2U) and subsequent selenation of the latter derivative to 2-selenouridine (Se2U) in the tRNA chain. The protein is tRNA 2-selenouridine synthase of Salmonella paratyphi A (strain ATCC 9150 / SARB42).